The chain runs to 247 residues: 5'-nucleotidase SurE (247 aa).

Residues Asp8, Asp9, Ser39, and Asn91 each coordinate a divalent metal cation.

The protein belongs to the SurE nucleotidase family. A divalent metal cation is required as a cofactor.

Its subcellular location is the cytoplasm. The catalysed reaction is a ribonucleoside 5'-phosphate + H2O = a ribonucleoside + phosphate. In terms of biological role, nucleotidase that shows phosphatase activity on nucleoside 5'-monophosphates. In Leptospira biflexa serovar Patoc (strain Patoc 1 / Ames), this protein is 5'-nucleotidase SurE.